The following is a 1530-amino-acid chain: Brefeldin A resistance protein (1530 aa).

The segment covering 1-26 (MNQNSDTTHGQALGSTLNHTTEVTRI) has biased composition (polar residues). A disordered region spans residues 1–100 (MNQNSDTTHG…SDDSSVDRLA (100 aa)). Asn28 is a glycosylation site (N-linked (GlcNAc...) asparagine). Low complexity predominate over residues 36–48 (SSSNVDESLDSSN). Basic and acidic residues predominate over residues 54–64 (KASHTNEEYRS). A glycan (N-linked (GlcNAc...) asparagine) is linked at Asn67. The segment covering 72 to 93 (PSSSNEPSPESSSNSDSSSSDD) has biased composition (low complexity). The 258-residue stretch at 153-410 (KTFPDIFLQP…FLDMGFDCHP (258 aa)) folds into the ABC transporter 1 domain. N-linked (GlcNAc...) asparagine glycosylation is found at Asn273, Asn334, and Asn450. Phosphoserine is present on residues Ser486 and Ser489. Position 491 is a phosphothreonine (Thr491). The next 6 helical transmembrane spans lie at 539-559 (AYIG…GSIF), 575-595 (VLFF…ANMF), 620-640 (LIVD…VLYF), 649-669 (GGFW…SAFF), 684-704 (ALGG…IPNI), and 791-811 (LAII…ASET). A disordered region spans residues 843–864 (PLDLETGQDTQGGDVVKESPDN). One can recognise an ABC transporter 2 domain in the interval 882-1125 (FSWRNLNYDI…LLNYFESHGA (244 aa)). 918 to 925 (GESGAGKT) contacts ATP. N-linked (GlcNAc...) asparagine glycans are attached at residues Asn1159 and Asn1175. Thr1186 bears the Phosphothreonine mark. Helical transmembrane passes span 1220 to 1240 (ILMS…FTFY), 1255 to 1275 (AVFM…PKFI), 1300 to 1320 (AIIV…LCWF), 1338 to 1358 (YAWL…QAVA), 1367 to 1387 (ASVV…VLQP), and 1392 to 1412 (VGFW…EGLL). Asn1449 and Asn1460 each carry an N-linked (GlcNAc...) asparagine glycan. Residues 1492–1512 (GIFVGYVFFNIFAVLLLFYVF) traverse the membrane as a helical segment.

Belongs to the ABC transporter superfamily. ABCG family. PDR (TC 3.A.1.205) subfamily.

Its subcellular location is the membrane. Its function is as follows. Confers hyper-resistance to brefeldin A (BFA), an inhibitor of intracellular protein transport. Could serve as an efflux pump of various antibiotics. This Schizosaccharomyces pombe (strain 972 / ATCC 24843) (Fission yeast) protein is Brefeldin A resistance protein (bfr1).